Here is a 296-residue protein sequence, read N- to C-terminus: MALATGPGKQTQLREVEGVPLQAAIVDNWGQIQSFEAKPDDLLICTYPKSGTTWIQEIVDMIEQNGDVEKCQRALIQHRHPFIEWARPPQPSGVEKAQAMPSPRILRTHLPTRLLPPSFWENNCKFLYVARNVKDCMVSYYHFQRMNQVLPDPGTWEEYFETFINGKVAWGSWFEHVKGWWEVKGRYQILFLFYEDIKKDPKCEIRKVAQFMGKHLDETVLDKIVQETSFEKMKDNPMINRSTVPKSIMDQSISPFMRKGTVGDWKNHFTVAQSHRLDELYRKKMEGVSIDFCLEL.

3'-phosphoadenylyl sulfate is bound at residue 49–54; that stretch reads KSGTTW. 107 to 109 is a binding site for substrate; sequence RTH. Residue H109 is the Proton acceptor of the active site. Residues R131, S139, Y194, and 228–233 contribute to the 3'-phosphoadenylyl sulfate site; that span reads TSFEKM. S139 bears the Phosphoserine mark. S254 carries the phosphoserine modification. 256 to 260 lines the 3'-phosphoadenylyl sulfate pocket; it reads FMRKG.

The protein belongs to the sulfotransferase 1 family. In terms of tissue distribution, found in gastrointestinal tract tissues, liver and kidney.

Its subcellular location is the cytoplasm. It localises to the lysosome. The protein localises to the mitochondrion. The catalysed reaction is a phenol + 3'-phosphoadenylyl sulfate = an aryl sulfate + adenosine 3',5'-bisphosphate + H(+). It catalyses the reaction cholesterol + 3'-phosphoadenylyl sulfate = cholesterol sulfate + adenosine 3',5'-bisphosphate + H(+). In terms of biological role, sulfotransferase that utilizes 3'-phospho-5'-adenylyl sulfate (PAPS) to catalyze the sulfate conjugation of phenolic compounds. Does not transfer sulfate to steroids, dopamine, acetaminophen, or alpha-naphthol. Except in mitochondria, where it can add sulfate to cholesterol producing cholesterol sulfate, which alters mitochondrial membrane organization, and impacts protein complex mobility increasing state-III respiration, thereby modulating mitochondrial respiration. Catalyzes the sulfation of the carcinogenic N-hydroxy-2-acetylaminofluorene leading to highly reactive intermediates capable of forming DNA adducts, potentially resulting in mutagenesis. The sequence is that of Sulfotransferase 1C2 (SULT1C2) from Oryctolagus cuniculus (Rabbit).